We begin with the raw amino-acid sequence, 311 residues long: Pyrimidine-specific ribonucleoside hydrolase RihA (311 aa).

Histidine 240 is an active-site residue.

It belongs to the IUNH family. RihA subfamily.

Functionally, hydrolyzes cytidine or uridine to ribose and cytosine or uracil, respectively. The chain is Pyrimidine-specific ribonucleoside hydrolase RihA from Salmonella paratyphi B (strain ATCC BAA-1250 / SPB7).